A 309-amino-acid chain; its full sequence is Porphobilinogen deaminase (309 aa).

At cysteine 241 the chain carries S-(dipyrrolylmethanemethyl)cysteine.

Belongs to the HMBS family. Monomer. It depends on dipyrromethane as a cofactor.

The catalysed reaction is 4 porphobilinogen + H2O = hydroxymethylbilane + 4 NH4(+). It participates in porphyrin-containing compound metabolism; protoporphyrin-IX biosynthesis; coproporphyrinogen-III from 5-aminolevulinate: step 2/4. Functionally, tetrapolymerization of the monopyrrole PBG into the hydroxymethylbilane pre-uroporphyrinogen in several discrete steps. In Bacillus anthracis (strain A0248), this protein is Porphobilinogen deaminase.